A 481-amino-acid polypeptide reads, in one-letter code: F-box/FBD/LRR-repeat protein At5g18770 (481 aa).

Residues 23-69 (EDMISALPDHLLCHILIFLSTDESVLTSVLSSRWRNLWKWVPRLDLN) form the F-box domain. LRR repeat units follow at residues 126–153 (KPNV…TLSA), 159–185 (CLKL…YLED), 186–211 (VVFP…KLSL), 214–234 (DDVV…TLKR), 236–261 (VPVY…SLID), 289–314 (DELS…TISW), and 340–368 (ATMS…HFTL). Residues 378 to 430 (VITGFSRVLPRCLVFSLESVEMESPITEKATELKLVRYFLENSATLKKLVLLL) enclose the FBD domain.

This Arabidopsis thaliana (Mouse-ear cress) protein is F-box/FBD/LRR-repeat protein At5g18770.